The following is a 162-amino-acid chain: Endoribonuclease YbeY (162 aa).

Zn(2+)-binding residues include His-117, His-121, and His-127.

Belongs to the endoribonuclease YbeY family. It depends on Zn(2+) as a cofactor.

The protein resides in the cytoplasm. In terms of biological role, single strand-specific metallo-endoribonuclease involved in late-stage 70S ribosome quality control and in maturation of the 3' terminus of the 16S rRNA. The polypeptide is Endoribonuclease YbeY (Francisella tularensis subsp. novicida (strain U112)).